The sequence spans 336 residues: Speedy protein E1 (336 aa).

Residues 16 to 50 form a disordered region; it reads GVDPSPPCRSLGWKRKREWSDESEEEPEKELAPEP. The span at 36–50 shows a compositional bias: acidic residues; that stretch reads DESEEEPEKELAPEP.

The protein belongs to the Speedy/Ringo family. In terms of tissue distribution, predominantly expressed in testis and heart.

This chain is Speedy protein E1, found in Homo sapiens (Human).